The chain runs to 140 residues: Large ribosomal subunit protein uL16 (140 aa).

This sequence belongs to the universal ribosomal protein uL16 family. As to quaternary structure, part of the 50S ribosomal subunit.

In terms of biological role, binds 23S rRNA and is also seen to make contacts with the A and possibly P site tRNAs. This Phytoplasma mali (strain AT) protein is Large ribosomal subunit protein uL16.